We begin with the raw amino-acid sequence, 360 residues long: Holliday junction branch migration complex subunit RuvB (360 aa).

Residues His-4–Tyr-196 form a large ATPase domain (RuvB-L) region. Residues Leu-35, Arg-36, Gly-77, Lys-80, Thr-81, Thr-82, Glu-143–Phe-145, Arg-186, Tyr-196, and Arg-233 each bind ATP. Thr-81 provides a ligand contact to Mg(2+). The segment at Glu-197–Glu-267 is small ATPAse domain (RuvB-S). A head domain (RuvB-H) region spans residues Gln-270–Asp-360. Residues Arg-306, Arg-325, and Arg-330 each contribute to the DNA site.

This sequence belongs to the RuvB family. Homohexamer. Forms an RuvA(8)-RuvB(12)-Holliday junction (HJ) complex. HJ DNA is sandwiched between 2 RuvA tetramers; dsDNA enters through RuvA and exits via RuvB. An RuvB hexamer assembles on each DNA strand where it exits the tetramer. Each RuvB hexamer is contacted by two RuvA subunits (via domain III) on 2 adjacent RuvB subunits; this complex drives branch migration. In the full resolvosome a probable DNA-RuvA(4)-RuvB(12)-RuvC(2) complex forms which resolves the HJ.

It localises to the cytoplasm. The catalysed reaction is ATP + H2O = ADP + phosphate + H(+). In terms of biological role, the RuvA-RuvB-RuvC complex processes Holliday junction (HJ) DNA during genetic recombination and DNA repair, while the RuvA-RuvB complex plays an important role in the rescue of blocked DNA replication forks via replication fork reversal (RFR). RuvA specifically binds to HJ cruciform DNA, conferring on it an open structure. The RuvB hexamer acts as an ATP-dependent pump, pulling dsDNA into and through the RuvAB complex. RuvB forms 2 homohexamers on either side of HJ DNA bound by 1 or 2 RuvA tetramers; 4 subunits per hexamer contact DNA at a time. Coordinated motions by a converter formed by DNA-disengaged RuvB subunits stimulates ATP hydrolysis and nucleotide exchange. Immobilization of the converter enables RuvB to convert the ATP-contained energy into a lever motion, pulling 2 nucleotides of DNA out of the RuvA tetramer per ATP hydrolyzed, thus driving DNA branch migration. The RuvB motors rotate together with the DNA substrate, which together with the progressing nucleotide cycle form the mechanistic basis for DNA recombination by continuous HJ branch migration. Branch migration allows RuvC to scan DNA until it finds its consensus sequence, where it cleaves and resolves cruciform DNA. This Nocardioides sp. (strain ATCC BAA-499 / JS614) protein is Holliday junction branch migration complex subunit RuvB.